The following is a 388-amino-acid chain: bZIP transcription factor ABI5 homolog (388 aa).

The segment at Met-1–Ile-36 is disordered. Position 44 is a phosphoserine (Ser-44). One can recognise a bZIP domain in the interval Val-302 to Glu-365. Residues Arg-304–Lys-323 are basic motif. The segment at Leu-330–Leu-344 is leucine-zipper. Residues Lys-368–Trp-388 are disordered.

The protein belongs to the bZIP family. ABI5 subfamily. Forms homodimers. Interacts with VP1. Interacts with GF14D. Interacts with PP2C51. Interacts with SAPK2. Post-translationally, phosphorylated at Ser-44 by SAPK6. In terms of tissue distribution, expressed in roots, leaves and panicles. Expressed in seeds.

It localises to the nucleus. Functionally, transcription factor that possesses transactivation activity in yeast. Involved in abscisic acid (ABA) signaling pathway. Binds to the G-box motif 5'-CACGTG-3' of TRAB1 gene promoter. Involved in the regulation of pollen maturation. May act as negative regulator of salt stress response. Together with PYL5, PP2C30 and SAPK2, is part of an ABA signaling unit that modulates seed germination and early seedling growth. This chain is bZIP transcription factor ABI5 homolog, found in Oryza sativa subsp. japonica (Rice).